A 200-amino-acid polypeptide reads, in one-letter code: Large ribosomal subunit protein uL4 (200 aa).

The tract at residues 42-65 (TRAQKTRSEVSGGGAKPWRQKGTG) is disordered.

Belongs to the universal ribosomal protein uL4 family. In terms of assembly, part of the 50S ribosomal subunit.

In terms of biological role, one of the primary rRNA binding proteins, this protein initially binds near the 5'-end of the 23S rRNA. It is important during the early stages of 50S assembly. It makes multiple contacts with different domains of the 23S rRNA in the assembled 50S subunit and ribosome. Functionally, forms part of the polypeptide exit tunnel. This Vibrio campbellii (strain ATCC BAA-1116) protein is Large ribosomal subunit protein uL4.